Reading from the N-terminus, the 132-residue chain is Small ribosomal subunit protein uS8 (132 aa).

This sequence belongs to the universal ribosomal protein uS8 family. Part of the 30S ribosomal subunit. Contacts proteins S5 and S12.

Functionally, one of the primary rRNA binding proteins, it binds directly to 16S rRNA central domain where it helps coordinate assembly of the platform of the 30S subunit. The polypeptide is Small ribosomal subunit protein uS8 (Borrelia duttonii (strain Ly)).